The primary structure comprises 1102 residues: Voltage-gated delayed rectifier potassium channel KCNH8 (1102 aa).

Over 1-225 (MPVMKGLLAP…HFSTFKAGWD (225 aa)) the chain is Cytoplasmic. Residues 18-90 (IATRFDGTHS…LQIEKSLEEK (73 aa)) form the PAS domain. Residues 93–145 (FKGEIMFYKKNGAPFWCLLDIVPIKNEKGDVVLFLASFKDITDTKVKITSEDK) enclose the PAC domain. A compositionally biased stretch (basic and acidic residues) spans 142–151 (SEDKKEDRTK). Residues 142-162 (SEDKKEDRTKGRSRAGSHFDS) are disordered. A helical transmembrane segment spans residues 226 to 246 (WLILLATFYVAVTVPYNVCFI). The Extracellular segment spans residues 247–255 (GNEDLSTTR). A helical transmembrane segment spans residues 256 to 276 (STTVSDIAVEILFIIDIILNF). Over 277–298 (RTTYVSKSGQVIFEARSICIHY) the chain is Cytoplasmic. Residues 299-319 (VTTWFIIDLIAALPFDLLYAF) form a helical membrane-spanning segment. Asn320 is a glycosylation site (N-linked (GlcNAc...) asparagine). Residues 320–327 (NVTVVSLV) lie on the Extracellular side of the membrane. Residues 328–348 (HLLKTVRLLRLLRLLQKLDRY) traverse the membrane as a helical; Voltage-sensor segment. Over 349 to 357 (SQHSTIVLT) the chain is Cytoplasmic. Residues 358–378 (LLMSMFALLAHWMACIWYVIG) traverse the membrane as a helical segment. The Extracellular portion of the chain corresponds to 379-419 (KMEREDNSLLKWEVGWLHELGKRLESPYYGNNTLGGPSIRS). Asn409 carries N-linked (GlcNAc...) asparagine glycosylation. Residues 420–440 (AYIAALYFTLSSLTSVGFGNV) constitute an intramembrane region (pore-forming). The Selectivity filter signature appears at 434–439 (SVGFGN). Over 441-448 (SANTDAEK) the chain is Extracellular. Residues 449 to 469 (IFSICTMLIGALMHALVFGNV) form a helical membrane-spanning segment. Residues 470–1102 (TAIIQRMYSR…DVKDSKAINV (633 aa)) lie on the Cytoplasmic side of the membrane. A cNMP-binding domain region spans residues 551–668 (LFECASRGCL…HKFVEDIQHD (118 aa)). Polar residues predominate over residues 684-693 (RLSNKSTVSQ). 3 disordered regions span residues 684 to 743 (RLSN…KKTG), 764 to 841 (HSPI…PEPR), and 960 to 991 (LVGSSPQRTEAHEQNPADSELHHSPNLDYSPS). Acidic residues predominate over residues 710–723 (VEDEEEEEVEEEET). The segment covering 724–737 (TSLSPIYTRGSSVS) has biased composition (polar residues). Residues 968–984 (TEAHEQNPADSELHHSP) are compositionally biased toward basic and acidic residues.

It belongs to the potassium channel family. H (Eag) (TC 1.A.1.20) subfamily. Kv12.1/KCNH8 sub-subfamily. In terms of assembly, the potassium channel is probably composed of a homo- or heterotetrameric complex of pore-forming alpha subunits that can associate with modulating beta subunits.

It is found in the membrane. The catalysed reaction is K(+)(in) = K(+)(out). Its function is as follows. Pore-forming (alpha) subunit of a voltage-gated delayed rectifier potassium channel that mediates outward-rectifying potassium currents. Elicits a slowly activating, non-inactivating and slowly deactivation outwards potassium current at depolarizating voltages from -30 mV to +50mV. Shows no obvious change in the activation rate from different holding potentials. Activation is strongly dependent on the pH of the external solution. The polypeptide is Voltage-gated delayed rectifier potassium channel KCNH8 (Mus musculus (Mouse)).